A 511-amino-acid polypeptide reads, in one-letter code: AMP phosphorylase (511 aa).

AMP-binding positions include G168, 194-199 (SRAITS), and T203. D256 serves as the catalytic Proton donor. Residues S262 and K286 each contribute to the AMP site.

It belongs to the thymidine/pyrimidine-nucleoside phosphorylase family. Type 2 subfamily.

The catalysed reaction is AMP + phosphate = alpha-D-ribose 1,5-bisphosphate + adenine. The enzyme catalyses CMP + phosphate = cytosine + alpha-D-ribose 1,5-bisphosphate. It catalyses the reaction UMP + phosphate = alpha-D-ribose 1,5-bisphosphate + uracil. Its function is as follows. Catalyzes the conversion of AMP and phosphate to adenine and ribose 1,5-bisphosphate (R15P). Exhibits phosphorylase activity toward CMP and UMP in addition to AMP. Functions in an archaeal AMP degradation pathway, together with R15P isomerase and RubisCO. The polypeptide is AMP phosphorylase (Thermofilum pendens (strain DSM 2475 / Hrk 5)).